Reading from the N-terminus, the 126-residue chain is MPEPSKSAPAPKKGSKKAVTKAQKKDGKKRKRSRKESYSVYVYKVLKQVHPDTGISSKAMGNMNSFVNDIFERIAGEASRLAHYNKRSTITSREIQTAVRLLLPGELAKHAVSEGTKAVTKYTSSK.

The span at 1-12 shows a compositional bias: low complexity; sequence MPEPSKSAPAPK. The tract at residues 1–36 is disordered; the sequence is MPEPSKSAPAPKKGSKKAVTKAQKKDGKKRKRSRKE. The residue at position 2 (proline 2) is an N-acetylproline. Glutamate 3 carries the post-translational modification ADP-ribosyl glutamic acid. Lysine 6 bears the N6-(2-hydroxyisobutyryl)lysine; alternate mark. Lysine 6 carries the N6-(beta-hydroxybutyryl)lysine; alternate modification. Lysine 6 bears the N6-acetyllysine; alternate mark. N6-butyryllysine; alternate is present on lysine 6. Lysine 6 carries the post-translational modification N6-crotonyllysine; alternate. Residue lysine 6 is modified to N6-lactoyllysine; alternate. Lysine 6 is covalently cross-linked (Glycyl lysine isopeptide (Lys-Gly) (interchain with G-Cter in SUMO2); alternate). An ADP-ribosylserine modification is found at serine 7. Lysine 12 bears the N6-(beta-hydroxybutyryl)lysine; alternate mark. 2 positions are modified to N6-acetyllysine; alternate: lysine 12 and lysine 13. 2 positions are modified to N6-crotonyllysine; alternate: lysine 12 and lysine 13. Residue lysine 12 is modified to N6-lactoyllysine; alternate. Lysine 13 is subject to N6-(2-hydroxyisobutyryl)lysine; alternate. Serine 15 carries the phosphoserine; by STK4/MST1 modification. Residues lysine 16, lysine 17, lysine 21, and lysine 24 each carry the N6-acetyllysine; alternate modification. Lysine 16, lysine 17, lysine 21, and lysine 24 each carry N6-crotonyllysine; alternate. Residues lysine 16, lysine 17, lysine 21, and lysine 24 each carry the N6-lactoyllysine; alternate modification. N6-glutaryllysine; alternate is present on lysine 17. Lysine 21 and lysine 24 each carry N6-(2-hydroxyisobutyryl)lysine; alternate. Lysine 21 carries the post-translational modification N6-(beta-hydroxybutyryl)lysine; alternate. Lysine 21 carries the N6-butyryllysine; alternate modification. A Glycyl lysine isopeptide (Lys-Gly) (interchain with G-Cter in SUMO2); alternate cross-link involves residue lysine 21. Lysine 25 carries the post-translational modification N6-(2-hydroxyisobutyryl)lysine. Position 35 is an N6-(2-hydroxyisobutyryl)lysine; alternate (lysine 35). Residue lysine 35 is modified to N6-(beta-hydroxybutyryl)lysine; alternate. Position 35 is an N6-crotonyllysine; alternate (lysine 35). An N6-glutaryllysine; alternate modification is found at lysine 35. Lysine 35 carries the N6-succinyllysine; alternate modification. Lysine 35 is covalently cross-linked (Glycyl lysine isopeptide (Lys-Gly) (interchain with G-Cter in ubiquitin); alternate). At glutamate 36 the chain carries PolyADP-ribosyl glutamic acid. Serine 37 is subject to Phosphoserine; by AMPK. An N6-(2-hydroxyisobutyryl)lysine; alternate mark is found at lysine 44, lysine 47, and lysine 58. Position 44 is an N6-lactoyllysine; alternate (lysine 44). N6-glutaryllysine; alternate is present on residues lysine 44 and lysine 47. Lysine 47 is modified (N6-methyllysine; alternate). Lysine 58 is subject to N6,N6-dimethyllysine; alternate. The residue at position 80 (arginine 80) is a Dimethylated arginine. Lysine 86 carries the post-translational modification N6-(2-hydroxyisobutyryl)lysine; alternate. Lysine 86 carries the post-translational modification N6-acetyllysine; alternate. Lysine 86 carries the post-translational modification N6-lactoyllysine; alternate. Lysine 86 carries the post-translational modification N6,N6,N6-trimethyllysine; alternate. Omega-N-methylarginine is present on residues arginine 87 and arginine 93. N6-(2-hydroxyisobutyryl)lysine; alternate is present on lysine 109. Lysine 109 is subject to N6-lactoyllysine; alternate. Position 109 is an N6-glutaryllysine; alternate (lysine 109). The residue at position 109 (lysine 109) is an N6-methyllysine; alternate. Serine 113 carries an O-linked (GlcNAc) serine glycan. Threonine 116 carries the phosphothreonine modification. N6-(2-hydroxyisobutyryl)lysine; alternate is present on residues lysine 117 and lysine 121. N6-(beta-hydroxybutyryl)lysine; alternate is present on lysine 117. An N6-lactoyllysine; alternate mark is found at lysine 117 and lysine 121. N6-glutaryllysine; alternate occurs at positions 117 and 121. N6-succinyllysine; alternate occurs at positions 117 and 121. N6-methylated lysine; alternate is present on lysine 117. Lysine 121 participates in a covalent cross-link: Glycyl lysine isopeptide (Lys-Gly) (interchain with G-Cter in ubiquitin); alternate.

It belongs to the histone H2B family. As to quaternary structure, the nucleosome is a histone octamer containing two molecules each of H2A, H2B, H3 and H4 assembled in one H3-H4 heterotetramer and two H2A-H2B heterodimers. The octamer wraps approximately 147 bp of DNA. Post-translationally, monoubiquitination at Lys-35 (H2BK34Ub) by the MSL1/MSL2 dimer is required for histone H3 'Lys-4' (H3K4me) and 'Lys-79' (H3K79me) methylation and transcription activation at specific gene loci, such as HOXA9 and MEIS1 loci. Similarly, monoubiquitination at Lys-121 (H2BK120Ub) by the RNF20/40 complex gives a specific tag for epigenetic transcriptional activation and is also prerequisite for histone H3 'Lys-4' and 'Lys-79' methylation. It also functions cooperatively with the FACT dimer to stimulate elongation by RNA polymerase II. H2BK120Ub also acts as a regulator of mRNA splicing: deubiquitination by USP49 is required for efficient cotranscriptional splicing of a large set of exons. Phosphorylated on Ser-15 (H2BS14ph) by STK4/MST1 during apoptosis; which facilitates apoptotic chromatin condensation. Also phosphorylated on Ser-15 in response to DNA double strand breaks (DSBs), and in correlation with somatic hypermutation and immunoglobulin class-switch recombination. Phosphorylation at Ser-37 (H2BS36ph) by AMPK in response to stress promotes transcription. In terms of processing, glcNAcylation at Ser-113 promotes monoubiquitination of Lys-121. It fluctuates in response to extracellular glucose, and associates with transcribed genes. Post-translationally, ADP-ribosylated by PARP1 or PARP2 on Ser-7 (H2BS6ADPr) in response to DNA damage. H2BS6ADPr promotes recruitment of CHD1L. Mono-ADP-ribosylated on Glu-3 (H2BE2ADPr) by PARP3 in response to single-strand breaks. Poly ADP-ribosylation on Glu-36 (H2BE35ADPr) by PARP1 regulates adipogenesis: it inhibits phosphorylation at Ser-37 (H2BS36ph), thereby blocking expression of pro-adipogenetic genes. Crotonylation (Kcr) is specifically present in male germ cells and marks testis-specific genes in post-meiotic cells, including X-linked genes that escape sex chromosome inactivation in haploid cells. Crotonylation marks active promoters and enhancers and confers resistance to transcriptional repressors. It is also associated with post-meiotically activated genes on autosomes. In terms of processing, lactylated in macrophages by EP300/P300 by using lactoyl-CoA directly derived from endogenous or exogenous lactate, leading to stimulates gene transcription.

It is found in the nucleus. Its subcellular location is the chromosome. Its function is as follows. Core component of nucleosome. Nucleosomes wrap and compact DNA into chromatin, limiting DNA accessibility to the cellular machineries which require DNA as a template. Histones thereby play a central role in transcription regulation, DNA repair, DNA replication and chromosomal stability. DNA accessibility is regulated via a complex set of post-translational modifications of histones, also called histone code, and nucleosome remodeling. The protein is Histone H2B type 1-N (H2BC15) of Bos taurus (Bovine).